The following is a 199-amino-acid chain: uncharacterized protein (199 aa).

Residues 1–30 are disordered; the sequence is MEDAAAPGRTEGVLERQGAPPAAGQGGALV. A coiled-coil region spans residues 71 to 101; the sequence is RANATNKLTVIAEQIQHLQEQARKVLEDAHR.

This is an uncharacterized protein from Homo sapiens (Human).